A 110-amino-acid chain; its full sequence is uncharacterized protein (110 aa).

This is an uncharacterized protein from Saccharomyces cerevisiae (strain ATCC 204508 / S288c) (Baker's yeast).